Reading from the N-terminus, the 265-residue chain is Cytochrome c oxidase subunit 3 (265 aa).

7 consecutive transmembrane segments (helical) span residues 16 to 36 (PWPISGSLGALATTVGGVMYM), 41 to 61 (GGATLLSLGLIFILYTMFVWW), 81 to 101 (GPRYGSISFIVSEVMFLFAFF), 137 to 157 (TPILLSSGAAVTWAHHAILAG), 162 to 182 (AVYALVATVSLALVFTGFQGM), 200 to 220 (FFLATGFHGFHVIIGTLFLII), and 245 to 265 (WHFVDVVRLFPFVSIYWWGGI).

The protein belongs to the cytochrome c oxidase subunit 3 family. Component of the cytochrome c oxidase (complex IV, CIV), a multisubunit enzyme composed of a catalytic core of 3 subunits and several supernumerary subunits. The complex exists as a monomer or a dimer and forms supercomplexes (SCs) in the inner mitochondrial membrane with ubiquinol-cytochrome c oxidoreductase (cytochrome b-c1 complex, complex III, CIII).

The protein resides in the mitochondrion inner membrane. The catalysed reaction is 4 Fe(II)-[cytochrome c] + O2 + 8 H(+)(in) = 4 Fe(III)-[cytochrome c] + 2 H2O + 4 H(+)(out). Functionally, component of the cytochrome c oxidase, the last enzyme in the mitochondrial electron transport chain which drives oxidative phosphorylation. The respiratory chain contains 3 multisubunit complexes succinate dehydrogenase (complex II, CII), ubiquinol-cytochrome c oxidoreductase (cytochrome b-c1 complex, complex III, CIII) and cytochrome c oxidase (complex IV, CIV), that cooperate to transfer electrons derived from NADH and succinate to molecular oxygen, creating an electrochemical gradient over the inner membrane that drives transmembrane transport and the ATP synthase. Cytochrome c oxidase is the component of the respiratory chain that catalyzes the reduction of oxygen to water. Electrons originating from reduced cytochrome c in the intermembrane space (IMS) are transferred via the dinuclear copper A center (CU(A)) of subunit 2 and heme A of subunit 1 to the active site in subunit 1, a binuclear center (BNC) formed by heme A3 and copper B (CU(B)). The BNC reduces molecular oxygen to 2 water molecules using 4 electrons from cytochrome c in the IMS and 4 protons from the mitochondrial matrix. The protein is Cytochrome c oxidase subunit 3 (COX3) of Vicia faba (Broad bean).